The chain runs to 489 residues: Protein SOF1 (489 aa).

7 WD repeats span residues 65-105 (GHRD…EFVS), 113-158 (VTGL…YSNK), 177-214 (DGES…PVSD), 217-257 (WGAD…PTQK), 259-299 (VQTM…RSLN), 303-342 (DHVS…SREI), and 346-385 (KRMQ…RSNV). Composition is skewed to basic and acidic residues over residues 440 to 459 (REAN…ERKK) and 466 to 489 (HKYE…TQEK). The interval 440-489 (REANERRTRKDMPYISERKKQIVGTVHKYEDSGRDRKRRKEDDKRDTQEK) is disordered.

The protein belongs to the WD repeat DCAF13/WDSOF1 family. In terms of assembly, interacts with snoRNA U3. Interacts with NOP1 and MPP10. Component of the ribosomal small subunit (SSU) processome composed of at least 40 protein subunits and snoRNA U3.

The protein localises to the nucleus. The protein resides in the nucleolus. In terms of biological role, required for ribosomal RNA processing. The protein is Protein SOF1 (SOF1) of Saccharomyces cerevisiae (strain ATCC 204508 / S288c) (Baker's yeast).